An 87-amino-acid polypeptide reads, in one-letter code: U3-theraphotoxin-Hhn1a 7 (87 aa).

A signal peptide spans 1-24 (MVNMKASMFLTFAGLVLLFVVSYA). A propeptide spanning residues 25 to 52 (SESEEKEFPKEMLSSIFAVDNDFKQEER) is cleaved from the precursor. Disulfide bonds link C54–C67, C61–C72, and C66–C79.

This sequence belongs to the neurotoxin 10 (Hwtx-1) family. 51 (Hntx-8) subfamily. Hntx-8 sub-subfamily. In terms of tissue distribution, expressed by the venom gland.

It is found in the secreted. Its function is as follows. Ion channel inhibitor. This Cyriopagopus hainanus (Chinese bird spider) protein is U3-theraphotoxin-Hhn1a 7.